Here is a 527-residue protein sequence, read N- to C-terminus: Aspartokinase (527 aa).

Thr-333 bears the Phosphothreonine mark. One can recognise an ACT domain in the interval 442-527; sequence LVGKHMKQYI…RLEQLKRLGI (86 aa).

Belongs to the aspartokinase family. As to quaternary structure, homohexamer. Interacts with FPR1; the interaction is direct, plays a role in feedback inhibition of aspartokinase by threonine, and inhibited by tacrolimus and sirolimus.

It catalyses the reaction L-aspartate + ATP = 4-phospho-L-aspartate + ADP. Its pathway is amino-acid biosynthesis; L-methionine biosynthesis via de novo pathway; L-homoserine from L-aspartate: step 1/3. The protein operates within amino-acid biosynthesis; L-threonine biosynthesis; L-threonine from L-aspartate: step 1/5. Allosterically inhibited by threonine. Functionally, phosphorylates aspartate, the first step in the biosynthesis of amino acids that derive from aspartate (the aspartate family of amino acids), including methioinine and threonine, the latter of which is a precursor to isoleucine. This chain is Aspartokinase (HOM3), found in Saccharomyces cerevisiae (strain ATCC 204508 / S288c) (Baker's yeast).